A 349-amino-acid chain; its full sequence is Isopentenyl-diphosphate delta-isomerase (349 aa).

Residue 6–7 (RK) participates in substrate binding. Residues 62 to 64 (AMT), Ser-93, and Asn-122 contribute to the FMN site. Residue Gln-152 coordinates substrate. Position 153 (Glu-153) interacts with Mg(2+). FMN is bound by residues Lys-184, Thr-214, 258–259 (GG), and 280–281 (AG).

The protein belongs to the IPP isomerase type 2 family. As to quaternary structure, homooctamer. Dimer of tetramers. Requires FMN as cofactor. NADPH serves as cofactor. It depends on Mg(2+) as a cofactor.

Its subcellular location is the cytoplasm. It catalyses the reaction isopentenyl diphosphate = dimethylallyl diphosphate. Involved in the biosynthesis of isoprenoids. Catalyzes the 1,3-allylic rearrangement of the homoallylic substrate isopentenyl (IPP) to its allylic isomer, dimethylallyl diphosphate (DMAPP). The chain is Isopentenyl-diphosphate delta-isomerase from Bacillus licheniformis (strain ATCC 14580 / DSM 13 / JCM 2505 / CCUG 7422 / NBRC 12200 / NCIMB 9375 / NCTC 10341 / NRRL NRS-1264 / Gibson 46).